A 244-amino-acid polypeptide reads, in one-letter code: NAD(P)H-quinone oxidoreductase subunit K (244 aa).

[4Fe-4S] cluster-binding residues include Cys-60, Cys-61, Cys-125, and Cys-156.

The protein belongs to the complex I 20 kDa subunit family. As to quaternary structure, NDH-1 can be composed of about 15 different subunits; different subcomplexes with different compositions have been identified which probably have different functions. [4Fe-4S] cluster is required as a cofactor.

It is found in the cellular thylakoid membrane. It catalyses the reaction a plastoquinone + NADH + (n+1) H(+)(in) = a plastoquinol + NAD(+) + n H(+)(out). The enzyme catalyses a plastoquinone + NADPH + (n+1) H(+)(in) = a plastoquinol + NADP(+) + n H(+)(out). Functionally, NDH-1 shuttles electrons from an unknown electron donor, via FMN and iron-sulfur (Fe-S) centers, to quinones in the respiratory and/or the photosynthetic chain. The immediate electron acceptor for the enzyme in this species is believed to be plastoquinone. Couples the redox reaction to proton translocation, and thus conserves the redox energy in a proton gradient. Cyanobacterial NDH-1 also plays a role in inorganic carbon-concentration. The chain is NAD(P)H-quinone oxidoreductase subunit K from Prochlorococcus marinus (strain MIT 9515).